Consider the following 195-residue polypeptide: Protein M2-1 (195 aa).

A C3H1-type zinc finger spans residues 1-28 (MSRRNPCKFEIRGHCLNGRRCHYSHNYF). An oligomerization region spans residues 32–49 (PHALLVRQNFMLNKILKS). Residues Ser58 and Ser61 each carry the phosphoserine; by host modification. The globular core stretch occupies residues 76–171 (IVGVLESYIG…KNTLDIHKSI (96 aa)). Residues 126-163 (RVYNTVISYIESNRKNNKQTIHLLKRLPADVLKKTIKN) are binding to the phosphoprotein. The interval 172–194 (IISNPKESTVNDQNDQTKNNDIT) is disordered.

The protein belongs to the pneumoviridae M2-1 protein family. As to quaternary structure, homotetramer. The homotetramer interacts with RNA. Interacts with the phosphoprotein (P); this interaction is required for protein M2-1 function, localization in host inclusion bodies. Formation of a complex host PP1/M2-1/P allows P to target host PP1 phosphatase to the M2-1 substrate. Interacts with the nucleoprotein (N). Interacts with the matrix protein (M); this interaction directs M localization to cytoplasmic inclusions comprising viral proteins L, N, P, and M2-1 and mediates M association with the nucleocapsid. Interacts with host RELA. Interacts with host PABPC1 (via C-terminus). In terms of processing, phosphorylated by host in infected cells. Only dephosphorylated M2-1 is competent for viral mRNA binding. Cyclic turnover of phosphorylation-dephosphorylation of M2-1 is required for efficient viral transcription.

Its subcellular location is the virion. The protein resides in the host cytoplasm. The protein localises to the host nucleus. Functionally, acts as a tetrameric transcription processivity factor that binds in a competitive manner to RNA and the phosphoprotein (P) to prevent premature termination during transcription. Transcription anti-terminator that enhances readthrough of intergenic junctions during viral transcription. Preferentially binds to poly(A)-rich sequences. Plays a role in the association of the matrix protein with the nucleocapsid, which initiates assembly and budding. Also, can activate host NF-kappa-B through association with host RELA. This is Protein M2-1 (M2-1) from Human respiratory syncytial virus B (strain B1).